The primary structure comprises 517 residues: Phenol 2-monooxygenase, oxygenase component DmpN (517 aa).

Residues Glu109, Glu139, His142, Glu200, Glu234, and His237 each coordinate Fe cation.

Belongs to the TmoA/XamoA family. The multicomponent enzyme phenol hydroxylase is formed by DmpL (P1 component), DmpM (P2 component), DmpN (P3 component), DmpO (P4 component) and DmpP (P5 component). The oxygenase component is a dimer composed of three subunits, DmpL, DmpN and DmpO (DmpLNO). DmpN interacts with the auxiliary protein DmpK (P0 component). It depends on Fe(2+) as a cofactor.

The catalysed reaction is phenol + NADH + O2 + H(+) = catechol + NAD(+) + H2O. Its pathway is aromatic compound metabolism; phenol degradation. Its activity is regulated as follows. Requires DmpM for efficient turnover. The activity of DmpLNO oxygenase is inhibited by dithiothreitol (DTT) by a mechanism apparently involving H(2)O(2) generation. Functionally, part of a multicomponent enzyme which catalyzes the degradation of phenol and some of its methylated derivatives. DmpL, DmpN and DmpO form the oxygenase component of the complex. Required for growth on phenol and for in vitro phenol hydroxylase activity. This Pseudomonas sp. (strain CF600) protein is Phenol 2-monooxygenase, oxygenase component DmpN.